Reading from the N-terminus, the 275-residue chain is Trans-aconitate 2-methyltransferase (275 aa).

This sequence belongs to the methyltransferase superfamily. Tam family.

It is found in the cytoplasm. The enzyme catalyses trans-aconitate + S-adenosyl-L-methionine = (E)-3-(methoxycarbonyl)pent-2-enedioate + S-adenosyl-L-homocysteine. Functionally, catalyzes the S-adenosylmethionine monomethyl esterification of trans-aconitate. The chain is Trans-aconitate 2-methyltransferase from Pseudomonas aeruginosa (strain UCBPP-PA14).